The following is a 435-amino-acid chain: MIDQNLLRTNLDDVANALKVKRGFTLDVESVKALEEKRKALQVKTETLQAERNARSKNIGAAKARGEDISALLAEVDNMGNELNEAKVALDQVQAEIRELLLSVPNLPADEVPLGKDDTENLEVSRWGEPRQFDFEVKDHVALGEALNGLDFAAGVKLTASRFVVMKGKLARLHRALSQFMLDLHTEQHGYVETNVPFLVNHDTLFGTGQLPKFGEDLFHTQPLTGQDPNETQRPFSLIPTAEVPVTNLVRDEIIDEDSLPLRYTAHTPCFRSEAGSYGRDTRGLIRMHQFEKVEMVQIVAPEKSMEALEELTGHAEKVLQLLGLPYRKVLLCTGDMGFGSAKTYDLEVWLPAQNTYREISSCSNMWDFQARRMSARCKAKGDKKTRLVHTLNGSGLAVGRTLVAVLENYQNADGSITVPEVLRPYMGGVEVITA.

241-243 is a binding site for L-serine; it reads TAE. 272-274 provides a ligand contact to ATP; the sequence is RSE. Residue E295 coordinates L-serine. 359–362 serves as a coordination point for ATP; the sequence is EISS. S395 is a binding site for L-serine.

The protein belongs to the class-II aminoacyl-tRNA synthetase family. Type-1 seryl-tRNA synthetase subfamily. In terms of assembly, homodimer. The tRNA molecule binds across the dimer.

It is found in the cytoplasm. It carries out the reaction tRNA(Ser) + L-serine + ATP = L-seryl-tRNA(Ser) + AMP + diphosphate + H(+). It catalyses the reaction tRNA(Sec) + L-serine + ATP = L-seryl-tRNA(Sec) + AMP + diphosphate + H(+). The protein operates within aminoacyl-tRNA biosynthesis; selenocysteinyl-tRNA(Sec) biosynthesis; L-seryl-tRNA(Sec) from L-serine and tRNA(Sec): step 1/1. Its function is as follows. Catalyzes the attachment of serine to tRNA(Ser). Is also able to aminoacylate tRNA(Sec) with serine, to form the misacylated tRNA L-seryl-tRNA(Sec), which will be further converted into selenocysteinyl-tRNA(Sec). In Actinobacillus pleuropneumoniae serotype 7 (strain AP76), this protein is Serine--tRNA ligase.